The primary structure comprises 261 residues: Hydroxyethylthiazole kinase (261 aa).

A substrate-binding site is contributed by Met-39. The ATP site is built by Arg-115 and Thr-159. A substrate-binding site is contributed by Gly-186.

It belongs to the Thz kinase family. Mg(2+) is required as a cofactor.

It carries out the reaction 5-(2-hydroxyethyl)-4-methylthiazole + ATP = 4-methyl-5-(2-phosphooxyethyl)-thiazole + ADP + H(+). It participates in cofactor biosynthesis; thiamine diphosphate biosynthesis; 4-methyl-5-(2-phosphoethyl)-thiazole from 5-(2-hydroxyethyl)-4-methylthiazole: step 1/1. Catalyzes the phosphorylation of the hydroxyl group of 4-methyl-5-beta-hydroxyethylthiazole (THZ). The sequence is that of Hydroxyethylthiazole kinase from Macrococcus caseolyticus (strain JCSC5402) (Macrococcoides caseolyticum).